We begin with the raw amino-acid sequence, 394 residues long: MILGSTGSIGTQAIDLVLRNPDRFRVTGLSAAGGRVGLLAEQAHRLRVSTVAVAREDVVPVLREALTAQYGPGEPLPEILAGADAATQLAASDCHTVLNGITGSIGLAPTLAALEAGRTLALANKESLIVGGPLVKALAKPGQIIPVDSEHAALFQALAAGTRADVRKLVVTASGGPFRGRTKAELANVSPEHALAHPTWAMGPVITINSATLVNKGLEVIEAHLLYDIPFERIEVVVHPQSYVHSMVEFTDGSTLAQATPPDMRGPIAIGLGWPERVPDAAPAFDWTKASSWEFFPLDNDAFPSVGLARHVGQLAGTAPAVFNAANEECVDAFLNGTLPFNGIMETVTRVVEEHGTPRTGTSLTVADVLEAETWARARARELTVQTATAEARA.

Residues Thr6, Gly7, Ser8, Ile9, Ala32, and Asn124 each contribute to the NADPH site. A 1-deoxy-D-xylulose 5-phosphate-binding site is contributed by Lys125. Glu126 is an NADPH binding site. Asp148 contacts Mn(2+). Ser149, Glu150, Ser174, and His197 together coordinate 1-deoxy-D-xylulose 5-phosphate. Glu150 contacts Mn(2+). Gly203 provides a ligand contact to NADPH. The 1-deoxy-D-xylulose 5-phosphate site is built by Ser210, Asn215, Lys216, and Glu219. Residue Glu219 coordinates Mn(2+).

This sequence belongs to the DXR family. Mg(2+) serves as cofactor. The cofactor is Mn(2+).

The enzyme catalyses 2-C-methyl-D-erythritol 4-phosphate + NADP(+) = 1-deoxy-D-xylulose 5-phosphate + NADPH + H(+). The protein operates within isoprenoid biosynthesis; isopentenyl diphosphate biosynthesis via DXP pathway; isopentenyl diphosphate from 1-deoxy-D-xylulose 5-phosphate: step 1/6. In terms of biological role, catalyzes the NADPH-dependent rearrangement and reduction of 1-deoxy-D-xylulose-5-phosphate (DXP) to 2-C-methyl-D-erythritol 4-phosphate (MEP). In Streptomyces avermitilis (strain ATCC 31267 / DSM 46492 / JCM 5070 / NBRC 14893 / NCIMB 12804 / NRRL 8165 / MA-4680), this protein is 1-deoxy-D-xylulose 5-phosphate reductoisomerase.